The following is an 86-amino-acid chain: Small ribosomal subunit protein bS20 (86 aa).

The tract at residues 1 to 27 (MANSKSAKKRAIQAEKRRQHNASRRSM) is disordered.

It belongs to the bacterial ribosomal protein bS20 family.

Functionally, binds directly to 16S ribosomal RNA. This is Small ribosomal subunit protein bS20 from Vibrio atlanticus (strain LGP32) (Vibrio splendidus (strain Mel32)).